The following is a 374-amino-acid chain: tRNA-specific 2-thiouridylase MnmA (374 aa).

Residues 12–19 (GMSGGVDS) and methionine 38 contribute to the ATP site. Positions 98 to 100 (NPD) are interaction with target base in tRNA. Catalysis depends on cysteine 103, which acts as the Nucleophile. An intrachain disulfide couples cysteine 103 to cysteine 207. Glycine 128 is an ATP binding site. Residues 157 to 159 (KDQ) form an interaction with tRNA region. Cysteine 207 functions as the Cysteine persulfide intermediate in the catalytic mechanism. Residues 321–322 (RY) form an interaction with tRNA region.

It belongs to the MnmA/TRMU family.

The protein localises to the cytoplasm. It carries out the reaction S-sulfanyl-L-cysteinyl-[protein] + uridine(34) in tRNA + AH2 + ATP = 2-thiouridine(34) in tRNA + L-cysteinyl-[protein] + A + AMP + diphosphate + H(+). Its function is as follows. Catalyzes the 2-thiolation of uridine at the wobble position (U34) of tRNA, leading to the formation of s(2)U34. This chain is tRNA-specific 2-thiouridylase MnmA, found in Aliivibrio fischeri (strain ATCC 700601 / ES114) (Vibrio fischeri).